The sequence spans 1022 residues: Leucine--tRNA ligase (1022 aa).

Residues 47-57 (PYPNSPMHLGH) carry the 'HIGH' region motif. The short motif at 697 to 701 (KMSKS) is the 'KMSKS' region element. An ATP-binding site is contributed by K700.

The protein belongs to the class-I aminoacyl-tRNA synthetase family.

It localises to the cytoplasm. It carries out the reaction tRNA(Leu) + L-leucine + ATP = L-leucyl-tRNA(Leu) + AMP + diphosphate. The sequence is that of Leucine--tRNA ligase from Ignicoccus hospitalis (strain KIN4/I / DSM 18386 / JCM 14125).